Here is a 750-residue protein sequence, read N- to C-terminus: Penicillin-binding protein 2x (750 aa).

The chain crosses the membrane as a helical span at residues 29-49 (LSLLSVFVFAIFLVNFAVIIG). Ser-337 (acyl-ester intermediate) is an active-site residue. PASTA domains follow at residues 632-691 (QQSP…ILSD) and 692-750 (KAEE…TLGD).

Belongs to the transpeptidase family.

It is found in the cell membrane. Functionally, a transpeptidase that forms peptide cross-links between adjacent glycan strands in cell wall peptidoglycan (PG). Part of the divisome machinery that synthesizes the septal cross wall. Beta-lactams inactivate the PBPs by acylating an essential serine residue in the active site of these proteins. The protein is Penicillin-binding protein 2x (pbpX) of Streptococcus pneumoniae serotype 4 (strain ATCC BAA-334 / TIGR4).